The primary structure comprises 203 residues: Small ribosomal subunit protein uS4 (203 aa).

Positions R93–E154 constitute an S4 RNA-binding domain.

Belongs to the universal ribosomal protein uS4 family. As to quaternary structure, part of the 30S ribosomal subunit. Contacts protein S5. The interaction surface between S4 and S5 is involved in control of translational fidelity.

In terms of biological role, one of the primary rRNA binding proteins, it binds directly to 16S rRNA where it nucleates assembly of the body of the 30S subunit. Its function is as follows. With S5 and S12 plays an important role in translational accuracy. The polypeptide is Small ribosomal subunit protein uS4 (Prosthecochloris aestuarii (strain DSM 271 / SK 413)).